The following is a 307-amino-acid chain: MFDQATSMGDGIAEDRNHCGSNSLCRDRGRESKSRTEVGNRSPVQSSTDTPGTSASTPTSSSEDGHDKLLGVDPDYCRRILVRDAKGTIREIVLPKGLDLDRPKRTRTSFTAEQLYRLELEFQRCQYVVGRERTELARQLNLSETQVKVWFQNRRTKQKKDQTKDTDKRSSSTSESLATCNILRLLEQGRLLSVPAPPPNPLLAHPHPGNGSLLGSPSVSTSSGVSSSTTPPGAGSGTFGLSLSSLSGTPPSPRLGVPPPSLCFTMPLLSGAHHELPSGYGCGTSAFEPYMRIERKDGELGGKKTVS.

Disordered regions lie at residues Met1–Leu70, Arg155–Glu175, and Pro197–Arg254. Basic and acidic residues predominate over residues Cys25–Val38. The span at Ser46–Ser62 shows a compositional bias: low complexity. Positions Pro103–Gln162 form a DNA-binding region, homeobox. Residues Lys159–Ser170 show a composition bias toward basic and acidic residues. Residues Leu202–Thr249 are compositionally biased toward low complexity.

It belongs to the EMX homeobox family. As to expression, expressed in the anterior neural keel and later in the preoptic area, optic stalk and ventral retina.

The protein resides in the nucleus. Functionally, transcription factor that may function in dorsoventral specification of the forebrain. Required for closure of the choroid fissure and together with vax1 is required for optic nerve differentiation and to limit retinal development to the optic cup. The chain is Ventral anterior homeobox 2 (vax2) from Danio rerio (Zebrafish).